Here is a 503-residue protein sequence, read N- to C-terminus: Lysine--tRNA ligase (503 aa).

Glu414 and Glu421 together coordinate Mg(2+).

This sequence belongs to the class-II aminoacyl-tRNA synthetase family. In terms of assembly, homodimer. Mg(2+) serves as cofactor.

The protein localises to the cytoplasm. It catalyses the reaction tRNA(Lys) + L-lysine + ATP = L-lysyl-tRNA(Lys) + AMP + diphosphate. The chain is Lysine--tRNA ligase from Neisseria gonorrhoeae (strain NCCP11945).